Consider the following 172-residue polypeptide: MTYYNVGKIVNTQGLQGELRVLSVTDFTDERFKKKSVLALFDDKDNYIMDVEVASHRKHKNFDIVKFKGLYHINDVEKYKGCSLKIAEENLTDLDDGEFYYHEIIGLDVYEGNTLIGQVKEILQPGANDVWVVKRKGKKDLLLPYIPPVVLDVDVAAGRIEVELMEGLDDED.

A PRC barrel domain is found at 96 to 168; it reads DGEFYYHEII…RIEVELMEGL (73 aa).

The protein belongs to the RimM family. Binds ribosomal protein uS19.

It is found in the cytoplasm. In terms of biological role, an accessory protein needed during the final step in the assembly of 30S ribosomal subunit, possibly for assembly of the head region. Essential for efficient processing of 16S rRNA. May be needed both before and after RbfA during the maturation of 16S rRNA. It has affinity for free ribosomal 30S subunits but not for 70S ribosomes. In Streptococcus thermophilus (strain ATCC BAA-491 / LMD-9), this protein is Ribosome maturation factor RimM.